A 348-amino-acid polypeptide reads, in one-letter code: Alanine racemase (348 aa).

K34 serves as the catalytic Proton acceptor; specific for D-alanine. An N6-(pyridoxal phosphate)lysine modification is found at K34. Residue R127 coordinates substrate. Residue Y243 is the Proton acceptor; specific for L-alanine of the active site. M291 contributes to the substrate binding site.

Belongs to the alanine racemase family. Pyridoxal 5'-phosphate is required as a cofactor.

It carries out the reaction L-alanine = D-alanine. The protein operates within amino-acid biosynthesis; D-alanine biosynthesis; D-alanine from L-alanine: step 1/1. Its function is as follows. Catalyzes the interconversion of L-alanine and D-alanine. May also act on other amino acids. This is Alanine racemase (alr) from Coprothermobacter proteolyticus (strain ATCC 35245 / DSM 5265 / OCM 4 / BT).